We begin with the raw amino-acid sequence, 2442 residues long: MAENLLDGPPNPKRAKLSSPGFSANDSTDFGSLFDLENDLPDELIPNGGELGLLNSGNLVPDAASKHKQLSELLRGGSGSSINPGIGNVSASSPVQQGLGGQAQGQPNSANMASLSAMGKSPLSQGDSSAPSLPKQAASTSGPTPAASQALNPQAQKQVGLATSSPATSQTGPGICMNANFNQTHPGLLNSNSGHSLINQASQGQAQVMNGSLGAAGRGRGAGMPYPTPAMQGASSSVLAETLTQVSPQMTGHAGLNTAQAGGMAKMGITGNTSPFGQPFSQAGGQPMGATGVNPQLASKQSMVNSLPTFPTDIKNTSVTNVPNMSQMQTSVGIVPTQAIATGPTADPEKRKLIQQQLVLLLHAHKCQRREQANGEVRACSLPHCRTMKNVLNHMTHCQAGKACQVAHCASSRQIISHWKNCTRHDCPVCLPLKNASDKRNQQTILGSPASGIQNTIGSVGTGQQNATSLSNPNPIDPSSMQRAYAALGLPYMNQPQTQLQPQVPGQQPAQPQTHQQMRTLNPLGNNPMNIPAGGITTDQQPPNLISESALPTSLGATNPLMNDGSNSGNIGTLSTIPTAAPPSSTGVRKGWHEHVTQDLRSHLVHKLVQAIFPTPDPAALKDRRMENLVAYAKKVEGDMYESANSRDEYYHLLAEKIYKIQKELEEKRRSRLHKQGILGNQPALPAPGAQPPVIPQAQPVRPPNGPLSLPVNRMQVSQGMNSFNPMSLGNVQLPQAPMGPRAASPMNHSVQMNSMGSVPGMAISPSRMPQPPNMMGAHTNNMMAQAPAQSQFLPQNQFPSSSGAMSVGMGQPPAQTGVSQGQVPGAALPNPLNMLGPQASQLPCPPVTQSPLHPTPPPASTAAGMPSLQHTTPPGMTPPQPAAPTQPSTPVSSSGQTPTPTPGSVPSATQTQSTPTVQAAAQAQVTPQPQTPVQPPSVATPQSSQQQPTPVHAQPPGTPLSQAAASIDNRVPTPSSVASAETNSQQPGPDVPVLEMKTETQAEDTEPDPGESKGEPRSEMMEEDLQGASQVKEETDIAEQKSEPMEVDEKKPEVKVEVKEEEESSSNGTASQSTSPSQPRKKIFKPEELRQALMPTLEALYRQDPESLPFRQPVDPQLLGIPDYFDIVKNPMDLSTIKRKLDTGQYQEPWQYVDDVWLMFNNAWLYNRKTSRVYKFCSKLAEVFEQEIDPVMQSLGYCCGRKYEFSPQTLCCYGKQLCTIPRDAAYYSYQNRYHFCEKCFTEIQGENVTLGDDPSQPQTTISKDQFEKKKNDTLDPEPFVDCKECGRKMHQICVLHYDIIWPSGFVCDNCLKKTGRPRKENKFSAKRLQTTRLGNHLEDRVNKFLRRQNHPEAGEVFVRVVASSDKTVEVKPGMKSRFVDSGEMSESFPYRTKALFAFEEIDGVDVCFFGMHVQEYGSDCPPPNTRRVYISYLDSIHFFRPRCLRTAVYHEILIGYLEYVKKLGYVTGHIWACPPSEGDDYIFHCHPPDQKIPKPKRLQEWYKKMLDKAFAERIIHDYKDIFKQATEDRLTSAKELPYFEGDFWPNVLEESIKELEQEEEERKKEESTAASETTEGSQGDSKNAKKKNNKKTNKNKSSISRANKKKPSMPNVSNDLSQKLYATMEKHKEVFFVIHLHAGPVINTLPPIVDPDPLLSCDLMDGRDAFLTLARDKHWEFSSLRRSKWSTLCMLVELHTQGQDRFVYTCNECKHHVETRWHCTVCEDYDLCINCYNTKSHAHKMVKWGLGLDDEGSSQGEPQSKSPQESRRLSIQRCIQSLVHACQCRNANCSLPSCQKMKRVVQHTKGCKRKTNGGCPVCKQLIALCCYHAKHCQENKCPVPFCLNIKHKLRQQQIQHRLQQAQLMRRRMATMNTRNVPQQSLPSPTSAPPGTPTQQPSTPQTPQPPAQPQPSPVSMSPAGFPSVARTQPPTTVSTGKPTSQVPAPPPPAQPPPAAVEAARQIEREAQQQQHLYRVNINNSMPPGRTGMGTPGSQMAPVSLNVPRPNQVSGPVMPSMPPGQWQQAPLPQQQPMPGLPRPVISMQAQAAVAGPRMPSVQPPRSISPSALQDLLRTLKSPSSPQQQQQVLNILKSNPQLMAAFIKQRTAKYVANQPGMQPQPGLQSQPGMQPQPGMHQQPSLQNLNAMQAGVPRPGVPPQQQAMGGLNPQGQALNIMNPGHNPNMASMNPQYREMLRRQLLQQQQQQQQQQQQQQQQQQGSAGMAGGMAGHGQFQQPQGPGGYPPAMQQQQRMQQHLPLQGSSMGQMAAQMGQLGQMGQPGLGADSTPNIQQALQQRILQQQQMKQQIGSPGQPNPMSPQQHMLSGQPQASHLPGQQIATSLSNQVRSPAPVQSPRPQSQPPHSSPSPRIQPQPSPHHVSPQTGSPHPGLAVTMASSIDQGHLGNPEQSAMLPQLNTPSRSALSSELSLVGDTTGDTLEKFVEGL.

2 disordered regions span residues 1-41 (MAEN…NDLP) and 74-179 (LRGG…CMNA). Ala-2 is modified (N-acetylalanine). Polar residues predominate over residues 20–30 (PGFSANDSTDF). A compositionally biased stretch (low complexity) spans 80-90 (SSINPGIGNVS). Residue Ser-121 is modified to Phosphoserine. Over residues 122-131 (PLSQGDSSAP) the composition is skewed to polar residues. At Ser-124 the chain carries Phosphoserine; by ATM. Residues 136 to 150 (QAASTSGPTPAASQA) show a composition bias toward low complexity. Positions 151 to 172 (LNPQAQKQVGLATSSPATSQTG) are enriched in polar residues. The residue at position 220 (Arg-220) is an Omega-N-methylarginine. The segment at 227-410 (PTPAMQGASS…GKACQVAHCA (184 aa)) is interaction with SRCAP. The interval 266 to 290 (KMGITGNTSPFGQPFSQAGGQPMGA) is disordered. Residues 270-284 (TGNTSPFGQPFSQAG) are compositionally biased toward polar residues. The segment at 347–433 (DPEKRKLIQQ…RHDCPVCLPL (87 aa)) adopts a TAZ-type 1 zinc-finger fold. 12 residues coordinate Zn(2+): His-363, Cys-367, Cys-380, Cys-385, His-394, Cys-398, Cys-404, Cys-409, His-418, Cys-422, Cys-427, and Cys-430. One can recognise a KIX domain in the interval 587–666 (GVRKGWHEHV…KIYKIQKELE (80 aa)). Residues Arg-601 and Arg-625 each carry the asymmetric dimethylarginine modification. Lys-657 carries the N6-acetyllysine modification. 2 stretches are compositionally biased toward polar residues: residues 794–805 (LPQNQFPSSSGA) and 814–823 (PAQTGVSQGQ). Positions 794–1083 (LPQNQFPSSS…STSPSQPRKK (290 aa)) are disordered. 2 stretches are compositionally biased toward pro residues: residues 844-860 (PCPP…PPPA) and 876-885 (GMTPPQPAAP). Composition is skewed to low complexity over residues 886-929 (TQPS…VTPQ) and 937-952 (PSVA…PTPV). A compositionally biased stretch (polar residues) spans 973-988 (PTPSSVASAETNSQQP). Lys-998 is covalently cross-linked (Glycyl lysine isopeptide (Lys-Gly) (interchain with G-Cter in SUMO1)). The segment covering 1011–1021 (GESKGEPRSEM) has biased composition (basic and acidic residues). Lys-1014 is modified (N6-acetyllysine). Position 1030 is a phosphoserine (Ser-1030). The span at 1032 to 1059 (VKEETDIAEQKSEPMEVDEKKPEVKVEV) shows a compositional bias: basic and acidic residues. Residues Lys-1033 and Lys-1056 each participate in a glycyl lysine isopeptide (Lys-Gly) (interchain with G-Cter in SUMO1) cross-link. Low complexity predominate over residues 1066–1078 (SSNGTASQSTSPS). Position 1076 is a phosphoserine (Ser-1076). The region spanning 1085-1192 (FKPEELRQAL…EVFEQEIDPV (108 aa)) is the Bromo domain. The interval 1124–1170 (DYFDIVKNPMDLSTIKRKLDTGQYQEPWQYVDDVWLMFNNAWLYNRK) is interaction with histone. Residues 1162-1180 (NNAWLYNRKTSRVYKFCSK) form an interaction with ASF1A region. Lys-1216 is subject to N6-acetyllysine. Residues 1323 to 1700 (KFSAKRLQTT…MLVELHTQGQ (378 aa)) enclose the CBP/p300-type HAT domain. 2 positions are modified to phosphoserine; by IKKA: Ser-1382 and Ser-1386. An interaction with histone region spans residues 1433–1435 (YLD). Acetyl-CoA contacts are provided by residues 1434 to 1436 (LDS), 1446 to 1447 (RT), Ile-1493, Arg-1498, and Trp-1502. An interaction with TRERF1 region spans residues 1460 to 1891 (YVKKLGYVTG…LPSPTSAPPG (432 aa)). A compositionally biased stretch (basic and acidic residues) spans 1556–1568 (LEQEEEERKKEES). The disordered stretch occupies residues 1556–1615 (LEQEEEERKKEESTAASETTEGSQGDSKNAKKKNNKKTNKNKSSISRANKKKPSMPNVSN). Lys-1583, Lys-1591, Lys-1592, Lys-1595, and Lys-1597 each carry N6-acetyllysine. Basic residues predominate over residues 1585–1595 (AKKKNNKKTNK). A ZZ-type zinc finger spans residues 1702 to 1750 (RFVYTCNECKHHVETRWHCTVCEDYDLCINCYNTKSHAHKMVKWGLGLD). Residues Cys-1707, Cys-1710, Cys-1720, Cys-1723, Cys-1729, Cys-1732, His-1738, and His-1740 each contribute to the Zn(2+) site. N6-acetyllysine occurs at positions 1741 and 1744. The residue at position 1763 (Ser-1763) is a Phosphoserine. A TAZ-type 2 zinc finger spans residues 1765–1846 (QESRRLSIQR…KCPVPFCLNI (82 aa)). Disordered stretches follow at residues 1874–1959 (TRNV…VEAA) and 1977–2028 (INNS…PLPQ). The segment covering 1900–1912 (PQTPQPPAQPQPS) has biased composition (pro residues). Residues 1925-1940 (ARTQPPTTVSTGKPTS) show a composition bias toward polar residues. Over residues 1943-1954 (PAPPPPAQPPPA) the composition is skewed to pro residues. Residues 2018–2027 (PGQWQQAPLP) show a composition bias toward low complexity. A phosphoserine mark is found at Ser-2063, Ser-2076, and Ser-2079. 5 stretches are compositionally biased toward low complexity: residues 2112–2137 (QPGM…HQQP), 2146–2160 (QAGV…QQQA), 2196–2219 (QLLQ…QGSA), 2228–2263 (HGQF…SMGQ), and 2294–2305 (RILQQQQMKQQI). Disordered stretches follow at residues 2112-2263 (QPGM…SMGQ) and 2294-2433 (RILQ…TTGD). 2 stretches are compositionally biased toward polar residues: residues 2315 to 2327 (SPQQ…QPQA) and 2334 to 2343 (QIATSLSNQV). The segment covering 2349–2372 (VQSPRPQSQPPHSSPSPRIQPQPS) has biased composition (pro residues). Phosphoserine is present on Ser-2351. Polar residues predominate over residues 2411–2424 (QLNTPSRSALSSEL).

In terms of assembly, found in a complex containing NCOA2; NCOA3; IKKA; IKKB and IKBKG. Probably part of a complex with HIF1A and EP300. Interacts with GATA1; the interaction results in acetylation and enhancement of transcriptional activity of GATA1. Interacts with MAF and ZCCHC12. Interacts with DAXX; the interaction is dependent on CBP sumoylation and results in suppression of the transcriptional activity via recruitment of HDAC2 to DAXX. Interacts with phosphorylated CREB1. Interacts with CITED4 (C-terminal region). Interacts (via the TAZ-type 1 domain) with HIF1A. Interacts with SRCAP, CARM1, ELF3, MLLT7/FOXO4, N4BP2, NCOA1, NCOA3, NCOA6, PCAF, DDX5, DDX17, PELP1, PML, SMAD1, SMAD2, SMAD3, SPIB and TRERF1. Interacts with KLF1; the interaction results in acetylation of KLF1 and enhancement of its transcriptional activity. Interacts with MTDH. Interacts with NFATC4. Interacts with MAFG; the interaction acetylates MAFG in the basic region and stimulates NFE2 transcriptional activity through increasing its DNA-binding activity. Interacts with IRF2; the interaction acetylates IRF2 and regulates its activity on the H4 promoter. Interacts with IRF3 (when phosphorylated); forming the dsRNA-activated factor 1 (DRAF1), a complex which activates the transcription of the type I interferon genes. Interacts (via N-terminus) with SS18L1/CREST (via C-terminus). Interacts with MECOM. Interacts with CITED1 (via C-terminus). Interacts with FOXO1; the interaction acetylates FOXO1 and inhibits its transcriptional activity. Interacts with NPAS2, CLOCK and BMAL1. Interacts with ASF1A and ASF1B; this promotes histone acetylation. Interacts with acetylated TP53/p53 and with the acetylated histones H3 and H4. Interacts (via transactivation domain and C-terminus) with PCNA; the interaction occurs on chromatin in UV-irradiated damaged cells. Interacts with DHX9 (via N-terminus); this interaction mediates association with RNA polymerase II holoenzyme and stimulates CREB-dependent transcriptional activation. Interacts with SMAD4; negatively regulated by ZBTB7A. Interacts with DUX4 (via C-terminus). Forms a complex with KMT2A and CREB1. Interacts with DDX3X; this interaction may facilitate HNF4A acetylation. Interacts with MSX1; the interaction may inhibit MSX1 autoinactivation. Interacts with ACSS2. As to quaternary structure, (Microbial infection) Interacts with HTLV-1 Tax, p30II and HBZ. (Microbial infection) Interacts with human herpes virus 8/HHV-8 protein vIRF-1; this interaction inhibits CREBBP binding to IRF3. In terms of assembly, (Microbial infection) Interacts with HIV-1 Tat. In terms of processing, methylation of the KIX domain by CARM1 blocks association with CREB. This results in the blockade of CREB signaling, and in activation of apoptotic response. Post-translationally, phosphorylated by CHUK/IKKA at Ser-1382 and Ser-1386; these phosphorylations promote cell growth by switching the binding preference of CREBBP from TP53 to NF-kappa-B. Phosphorylated by _ at Ser-124 in response to DNA damage, promoting interaction with MRE11 and lactylation of MRE11. Sumoylation negatively regulates transcriptional activity via the recruitment of DAAX. In terms of processing, autoacetylation is required for binding to protein substrates, such as acetylated histones and acetylated TP53/p53. Autoacetylation is induced by glucose and fatty acids.

The protein localises to the cytoplasm. It is found in the nucleus. The enzyme catalyses L-lysyl-[histone] + acetyl-CoA = N(6)-acetyl-L-lysyl-[histone] + CoA + H(+). It carries out the reaction L-lysyl-[protein] + acetyl-CoA = N(6)-acetyl-L-lysyl-[protein] + CoA + H(+). The catalysed reaction is (S)-lactoyl-CoA + L-lysyl-[protein] = N(6)-[(S)-lactoyl]-L-lysyl-[protein] + CoA + H(+). Acetylates histones, giving a specific tag for transcriptional activation. Mediates acetylation of histone H3 at 'Lys-18' and 'Lys-27' (H3K18ac and H3K27ac, respectively). Also acetylates non-histone proteins, like DDX21, FBL, IRF2, MAFG, NCOA3, POLR1E/PAF53 and FOXO1. Binds specifically to phosphorylated CREB and enhances its transcriptional activity toward cAMP-responsive genes. Acts as a coactivator of ALX1. Acts as a circadian transcriptional coactivator which enhances the activity of the circadian transcriptional activators: NPAS2-BMAL1 and CLOCK-BMAL1 heterodimers. Acetylates PCNA; acetylation promotes removal of chromatin-bound PCNA and its degradation during nucleotide excision repair (NER). Acetylates POLR1E/PAF53, leading to decreased association of RNA polymerase I with the rDNA promoter region and coding region. Acetylates DDX21, thereby inhibiting DDX21 helicase activity. Acetylates FBL, preventing methylation of 'Gln-105' of histone H2A (H2AQ104me). In addition to protein acetyltransferase, can use different acyl-CoA substrates, such as lactoyl-CoA, and is able to mediate protein lactylation. Catalyzes lactylation of MRE11 in response to DNA damage, thereby promoting DNA double-strand breaks (DSBs) via homologous recombination (HR). Functions as a transcriptional coactivator for SMAD4 in the TGF-beta signaling pathway. This Homo sapiens (Human) protein is CREB-binding protein.